An 833-amino-acid polypeptide reads, in one-letter code: Zinc phosphodiesterase ELAC protein 2 homolog (833 aa).

A mitochondrion-targeting transit peptide spans methionine 1–histidine 19. The segment covering leucine 624–proline 646 has biased composition (pro residues). The tract at residues leucine 624–leucine 652 is disordered.

Belongs to the RNase Z family. As to quaternary structure, homodimer. Requires Zn(2+) as cofactor. As to expression, highly expressed in the germline.

It is found in the mitochondrion. Its subcellular location is the nucleus. It catalyses the reaction Endonucleolytic cleavage of RNA, removing extra 3' nucleotides from tRNA precursor, generating 3' termini of tRNAs. A 3'-hydroxy group is left at the tRNA terminus and a 5'-phosphoryl group is left at the trailer molecule.. Its function is as follows. Zinc phosphodiesterase, which displays some tRNA 3'-processing endonuclease activity. Probably involved in tRNA maturation, by removing a 3'-trailer from precursor tRNA. Involved in germline proliferation. May be required for both mitosis and meiosis in germ cells. In terms of biological role, does not regulate the mitochondrial unfolded protein response following mitochondrial stress. Functionally, plays a role in mitochondrial unfolded protein response. Upon mitochondrial stress is exported from the nucleus where its tRNA endonuclease activity is negatively regulated. In response to mitochondrial stress, might be involved in activating a transcriptional response in an ATFS-1- and DVE-1-dependent manner. May play a role in negatively regulating the mitochondrial membrane potential. The polypeptide is Zinc phosphodiesterase ELAC protein 2 homolog (Caenorhabditis elegans).